Here is a 141-residue protein sequence, read N- to C-terminus: DUF35 domain-containing scaffold protein (141 aa).

Zn(2+) is bound by residues Cys-30, Cys-33, Cys-44, and Cys-47.

This sequence belongs to the scaffold protein DUF35 family. Interacts with acetoacetyl-CoA thiolase and HMG-CoA synthase (HMGCS) that catalyzes the first and second step in the mevalonate pathway, respectively.

Functionally, functions as a scaffold to connect the acetoacetyl-CoA thiolase and HMG-CoA synthase (HMGCS) dimers in the channeling thiolase/HMGCS complex, which allows for efficient coupling of the endergonic thiolase reaction with the exergonic HMGCS reaction. This chain is DUF35 domain-containing scaffold protein, found in Methanocaldococcus jannaschii (strain ATCC 43067 / DSM 2661 / JAL-1 / JCM 10045 / NBRC 100440) (Methanococcus jannaschii).